The following is a 325-amino-acid chain: Transaldolase (325 aa).

Lysine 125 serves as the catalytic Schiff-base intermediate with substrate.

The protein belongs to the transaldolase family. Type 2 subfamily.

The protein localises to the cytoplasm. It carries out the reaction D-sedoheptulose 7-phosphate + D-glyceraldehyde 3-phosphate = D-erythrose 4-phosphate + beta-D-fructose 6-phosphate. The protein operates within carbohydrate degradation; pentose phosphate pathway; D-glyceraldehyde 3-phosphate and beta-D-fructose 6-phosphate from D-ribose 5-phosphate and D-xylulose 5-phosphate (non-oxidative stage): step 2/3. Transaldolase is important for the balance of metabolites in the pentose-phosphate pathway. In Campylobacter jejuni subsp. jejuni serotype O:2 (strain ATCC 700819 / NCTC 11168), this protein is Transaldolase (tal).